A 176-amino-acid polypeptide reads, in one-letter code: NADH-quinone oxidoreductase subunit I 1 (176 aa).

4Fe-4S ferredoxin-type domains lie at Ile45–Thr77 and Arg87–Asp116. [4Fe-4S] cluster contacts are provided by Cys57, Cys60, Cys63, Cys67, Cys96, Cys99, Cys102, and Cys106.

Belongs to the complex I 23 kDa subunit family. NDH-1 is composed of 14 different subunits. Subunits NuoA, H, J, K, L, M, N constitute the membrane sector of the complex. Requires [4Fe-4S] cluster as cofactor.

It localises to the cell inner membrane. It carries out the reaction a quinone + NADH + 5 H(+)(in) = a quinol + NAD(+) + 4 H(+)(out). Its function is as follows. NDH-1 shuttles electrons from NADH, via FMN and iron-sulfur (Fe-S) centers, to quinones in the respiratory chain. The immediate electron acceptor for the enzyme in this species is believed to be ubiquinone. Couples the redox reaction to proton translocation (for every two electrons transferred, four hydrogen ions are translocated across the cytoplasmic membrane), and thus conserves the redox energy in a proton gradient. The chain is NADH-quinone oxidoreductase subunit I 1 from Geobacter metallireducens (strain ATCC 53774 / DSM 7210 / GS-15).